Reading from the N-terminus, the 657-residue chain is Kinesin-like protein KIF22 (657 aa).

Residues 1-33 (MNVRAKKKPQQREMASASSGPSRSLSKGGVSRR) are disordered. Residues 16–33 (SASSGPSRSLSKGGVSRR) are compositionally biased toward low complexity. Positions 38 to 360 (RVRVAVRLRP…LNFTARSKEV (323 aa)) constitute a Kinesin motor domain. 119–126 (GPTGAGKT) is a binding site for ATP. The tract at residues 388–415 (PSEAKKAKGPEEESTGSPESTAAPASAS) is disordered. Residues 402–415 (TGSPESTAAPASAS) are compositionally biased toward low complexity. Phosphoserine is present on residues Ser404, Ser419, and Ser444. Lys457 participates in a covalent cross-link: Glycyl lysine isopeptide (Lys-Gly) (interchain with G-Cter in SUMO2). The stretch at 457 to 502 (KRERMVLIKTVEEKNLEIERLKMKQKELEAKVLAQEALDPKEKENT) forms a coiled coil. Phosphoserine is present on residues Ser537, Ser554, and Ser573.

This sequence belongs to the TRAFAC class myosin-kinesin ATPase superfamily. Kinesin family. As to quaternary structure, interacts with FAM83D and SIAH1. In terms of processing, ubiquitinated; mediated by SIAH1 and leading to its subsequent proteasomal degradation.

It is found in the nucleus. Its subcellular location is the cytoplasm. The protein localises to the cytoskeleton. In terms of biological role, kinesin family member that is involved in spindle formation and the movements of chromosomes during mitosis and meiosis. Binds to microtubules and to DNA. Plays a role in congression of laterally attached chromosomes in NDC80-depleted cells. This is Kinesin-like protein KIF22 (Kif22) from Rattus norvegicus (Rat).